We begin with the raw amino-acid sequence, 104 residues long: MTDAKVFDELWQVICERAASESLEKSYVRHLLFHEKGIDKSLEKVGEEAVEFILAAKNGVSEKTVGEAADLIFHMMVALKAADVDFDLVEEELAVRRAGMHLHD.

It belongs to the PRA-PH family.

It is found in the cytoplasm. It carries out the reaction 1-(5-phospho-beta-D-ribosyl)-ATP + H2O = 1-(5-phospho-beta-D-ribosyl)-5'-AMP + diphosphate + H(+). The protein operates within amino-acid biosynthesis; L-histidine biosynthesis; L-histidine from 5-phospho-alpha-D-ribose 1-diphosphate: step 2/9. This Methanocorpusculum labreanum (strain ATCC 43576 / DSM 4855 / Z) protein is Phosphoribosyl-ATP pyrophosphatase.